A 436-amino-acid chain; its full sequence is Protein FAM83A (436 aa).

Residues 1-298 (MSRSRHVGKI…LYASSKPLMG (298 aa)) are DUF1669. The interval 73–95 (AQAKEPPDAPDSAGGAESGPRGL) is disordered. S301, S329, S350, and S359 each carry phosphoserine. The segment at 302 to 371 (PRLVAPFQPN…APIPPTVPRL (70 aa)) is disordered. Polar residues predominate over residues 321–349 (LSGTSDSASDRTSSNPFSSLSTGSNAHNQ). Positions 350-359 (SLSTSSGPSS) are enriched in low complexity.

Belongs to the FAM83 family. Directly interacts (via DUF1669) with casein kinase isoforms CSNK1A1, CSNK1A1L, CSNK1D and CSNK1E. In terms of processing, may be phosphorylated upon EGFR activation. As to expression, widely expressed, with relatively higher expression levels in adipose tissues, especially in epididymal and inguinal white adipose tissue (at protein level).

It is found in the cytoplasm. It localises to the mitochondrion. In terms of biological role, involved in mitochondrial maintenance during adipogenesis. May be acting by playing a role in the maintenance of normal mitochondrial function. This is Protein FAM83A from Mus musculus (Mouse).